Here is a 365-residue protein sequence, read N- to C-terminus: uncharacterized protein (365 aa).

31–38 (GPINSGKT) serves as a coordination point for ATP.

This sequence belongs to the archaeal ATPase family.

This is an uncharacterized protein from Methanocaldococcus jannaschii (strain ATCC 43067 / DSM 2661 / JAL-1 / JCM 10045 / NBRC 100440) (Methanococcus jannaschii).